The following is a 485-amino-acid chain: NADH-quinone oxidoreductase subunit N (485 aa).

A run of 14 helical transmembrane segments spans residues 8–28, 35–55, 71–91, 105–125, 127–147, 159–179, 203–223, 235–255, 271–291, 297–317, 326–346, 373–393, 408–430, and 455–475; these read LIAL…MLSI, FLNA…LWFV, GFAM…CTFA, FYLL…ANHL, ALFL…GYAF, YTIL…LVYA, LLAG…LAPF, PAPV…GVVM, VVLG…ALSQ, LLGY…IALQ, VGVY…VVSL, AAVM…LGFI, WWLV…RVAV, and IVVL…QPLI.

Belongs to the complex I subunit 2 family. As to quaternary structure, NDH-1 is composed of 13 different subunits. Subunits NuoA, H, J, K, L, M, N constitute the membrane sector of the complex.

The protein localises to the cell inner membrane. The enzyme catalyses a quinone + NADH + 5 H(+)(in) = a quinol + NAD(+) + 4 H(+)(out). NDH-1 shuttles electrons from NADH, via FMN and iron-sulfur (Fe-S) centers, to quinones in the respiratory chain. The immediate electron acceptor for the enzyme in this species is believed to be ubiquinone. Couples the redox reaction to proton translocation (for every two electrons transferred, four hydrogen ions are translocated across the cytoplasmic membrane), and thus conserves the redox energy in a proton gradient. This is NADH-quinone oxidoreductase subunit N from Salmonella paratyphi C (strain RKS4594).